Reading from the N-terminus, the 238-residue chain is Aspartate/glutamate leucyltransferase (238 aa).

Belongs to the R-transferase family. Bpt subfamily.

It localises to the cytoplasm. It catalyses the reaction N-terminal L-glutamyl-[protein] + L-leucyl-tRNA(Leu) = N-terminal L-leucyl-L-glutamyl-[protein] + tRNA(Leu) + H(+). It carries out the reaction N-terminal L-aspartyl-[protein] + L-leucyl-tRNA(Leu) = N-terminal L-leucyl-L-aspartyl-[protein] + tRNA(Leu) + H(+). Functionally, functions in the N-end rule pathway of protein degradation where it conjugates Leu from its aminoacyl-tRNA to the N-termini of proteins containing an N-terminal aspartate or glutamate. The polypeptide is Aspartate/glutamate leucyltransferase (Aeromonas hydrophila subsp. hydrophila (strain ATCC 7966 / DSM 30187 / BCRC 13018 / CCUG 14551 / JCM 1027 / KCTC 2358 / NCIMB 9240 / NCTC 8049)).